A 73-amino-acid chain; its full sequence is Translation initiation factor IF-1 1 (73 aa).

Positions M1–K72 constitute an S1-like domain.

This sequence belongs to the IF-1 family. In terms of assembly, component of the 30S ribosomal translation pre-initiation complex which assembles on the 30S ribosome in the order IF-2 and IF-3, IF-1 and N-formylmethionyl-tRNA(fMet); mRNA recruitment can occur at any time during PIC assembly.

The protein localises to the cytoplasm. One of the essential components for the initiation of protein synthesis. Stabilizes the binding of IF-2 and IF-3 on the 30S subunit to which N-formylmethionyl-tRNA(fMet) subsequently binds. Helps modulate mRNA selection, yielding the 30S pre-initiation complex (PIC). Upon addition of the 50S ribosomal subunit IF-1, IF-2 and IF-3 are released leaving the mature 70S translation initiation complex. The protein is Translation initiation factor IF-1 1 of Cupriavidus metallidurans (strain ATCC 43123 / DSM 2839 / NBRC 102507 / CH34) (Ralstonia metallidurans).